The chain runs to 322 residues: MKHIPVLEDGPWKTVCVKELNGLKKLKRKGKEPVRRANGYKTFRLDLEAPELGATVSTTAATNGLRDRTQPFPIATPVPASVAPAVPPGGGTDTAREFRGIRAPEVSDARKRGFALGTVGPGLPTPPPPPASQSLAPGDPEAHSFREQALRPRILLCAPPARPTQSAPLAPPAAPQESPVRPAPPTRPGESSYSSISHVIYNNHPDSSASPRKRPGEATAASTEIKALQQTRRLLANARERTRVHTISAAFEALRKQVPCYSYGQKLSKLAILRIACNYILSLARLADLDYSADHSNLSFSECVQRCTRTLQAEGRAKKRKE.

3 disordered regions span residues 77 to 96, 101 to 144, and 159 to 221; these read PVPASVAPAVPPGGGTDTAR, IRAP…EAHS, and PPAR…ATAA. Over residues 101–111 the composition is skewed to basic and acidic residues; it reads IRAPEVSDARK. The tract at residues 231–244 is basic motif; degenerate; that stretch reads TRRLLANARERTRV. The bHLH domain occupies 231 to 283; sequence TRRLLANARERTRVHTISAAFEALRKQVPCYSYGQKLSKLAILRIACNYILSL. Positions 245–283 are helix-loop-helix motif; that stretch reads HTISAAFEALRKQVPCYSYGQKLSKLAILRIACNYILSL.

Efficient DNA binding requires dimerization with another bHLH protein. Interacts with NEUROG3 and NEUROD1. Interacts with ZFPM2; mediates indirect interaction with GATA4. Forms a heterodimer with TCF3; repress transcription of TCF3 and TCF3/NEUROG3 dimer-induced transactivation of E box-dependent promoters. As to expression, expressed by subsets of mature neurons. Expressed in kidney (podocytes). Expression is restricted to the atria, lung mesenchyme, and vascular smooth muscle.

It is found in the nucleus. The protein localises to the nucleus speckle. The protein resides in the cytoplasm. Transcription factor that binds a palindromic (canonical) core consensus DNA sequence 5'-CANNTG- 3' known as an E-box element, possibly as a heterodimer with other bHLH proteins. Regulates endothelial cell proliferation, migration and tube-like structures formation. Modulates endothelial cell differentiation through NOS3. May be implicated in specification and differentiation of neuronal cell lineages in the brain. May participate in kidney development and may be involved in podocyte differentiation. During early embryonic development is involved in tissue-specific differentiation processes that are dependent on class II bHLH factors and namely modulates the differentiation program initiated by the pro-endocrine factor NEUROG3. During myogenesis, may play a role during the transition of myoblasts from the proliferative phase to the differentiation phase. Positively regulates HAMP transcription in two ways, firstly by acting directly on the HAMP promoter via E-boxes binding and indirectly through increased phosphorylation of SMAD protein complex. Repress NEUROG3-dependent gene activation in a gene-specific manner through at least two mechanisms; requires only either the sequestering of a general partner such as TCF3 through heterodimerization, either also requires binding of the bHLH domain to DNA via a basic motif. This chain is Transcription factor Atoh8, found in Mus musculus (Mouse).